Consider the following 242-residue polypeptide: tRNA (guanine-N(7)-)-methyltransferase (242 aa).

The S-adenosyl-L-methionine site is built by E66, E91, D118, and D141. The active site involves D141. Substrate-binding positions include K145, D177, and 214-217 (TKFE).

This sequence belongs to the class I-like SAM-binding methyltransferase superfamily. TrmB family. Monomer.

The catalysed reaction is guanosine(46) in tRNA + S-adenosyl-L-methionine = N(7)-methylguanosine(46) in tRNA + S-adenosyl-L-homocysteine. It participates in tRNA modification; N(7)-methylguanine-tRNA biosynthesis. Catalyzes the formation of N(7)-methylguanine at position 46 (m7G46) in tRNA. This chain is tRNA (guanine-N(7)-)-methyltransferase, found in Buchnera aphidicola subsp. Baizongia pistaciae (strain Bp).